The chain runs to 41 residues: Large ribosomal subunit protein bL36 (41 aa).

The protein belongs to the bacterial ribosomal protein bL36 family.

This is Large ribosomal subunit protein bL36 from Orientia tsutsugamushi (strain Boryong) (Rickettsia tsutsugamushi).